Here is a 305-residue protein sequence, read N- to C-terminus: Ornithine carbamoyltransferase, catabolic (305 aa).

Carbamoyl phosphate is bound by residues 50 to 53 (STRT), glutamine 77, arginine 101, and 128 to 131 (HPLQ). L-ornithine is bound by residues asparagine 159, aspartate 223, and 227-228 (SM). Carbamoyl phosphate-binding positions include 263-264 (CL) and arginine 291.

The protein belongs to the aspartate/ornithine carbamoyltransferase superfamily. OTCase family.

Its subcellular location is the cytoplasm. The enzyme catalyses carbamoyl phosphate + L-ornithine = L-citrulline + phosphate + H(+). It functions in the pathway amino-acid degradation; L-arginine degradation via ADI pathway; carbamoyl phosphate from L-arginine: step 2/2. Functionally, reversibly catalyzes the transfer of the carbamoyl group from carbamoyl phosphate (CP) to the N(epsilon) atom of ornithine (ORN) to produce L-citrulline. The chain is Ornithine carbamoyltransferase, catabolic from Thermoplasma acidophilum (strain ATCC 25905 / DSM 1728 / JCM 9062 / NBRC 15155 / AMRC-C165).